The sequence spans 411 residues: 3-phosphoshikimate 1-carboxyvinyltransferase (411 aa).

Residues Lys-20, Ser-21, and Arg-25 each contribute to the 3-phosphoshikimate site. Residue Lys-20 coordinates phosphoenolpyruvate. Phosphoenolpyruvate is bound by residues Gly-86 and Arg-114. 3-phosphoshikimate contacts are provided by Ser-156, Ser-157, Gln-158, Ser-181, Asp-295, and Lys-322. Gln-158 serves as a coordination point for phosphoenolpyruvate. The active-site Proton acceptor is Asp-295. Phosphoenolpyruvate is bound by residues Arg-326, Arg-367, and Lys-393.

Belongs to the EPSP synthase family. Monomer.

Its subcellular location is the cytoplasm. It catalyses the reaction 3-phosphoshikimate + phosphoenolpyruvate = 5-O-(1-carboxyvinyl)-3-phosphoshikimate + phosphate. It participates in metabolic intermediate biosynthesis; chorismate biosynthesis. Functionally, catalyzes the transfer of the enolpyruvyl moiety of phosphoenolpyruvate (PEP) to the 5-hydroxyl of shikimate-3-phosphate (S3P) to produce enolpyruvyl shikimate-3-phosphate and inorganic phosphate. This is 3-phosphoshikimate 1-carboxyvinyltransferase from Picrophilus torridus (strain ATCC 700027 / DSM 9790 / JCM 10055 / NBRC 100828 / KAW 2/3).